The primary structure comprises 270 residues: Orotidine 5'-phosphate decarboxylase (270 aa).

Residues D39, 61 to 63, 93 to 102, Y221, and R239 contribute to the substrate site; these read KTH and DRKFADIGNT. Catalysis depends on K95, which acts as the Proton donor.

The protein belongs to the OMP decarboxylase family.

It catalyses the reaction orotidine 5'-phosphate + H(+) = UMP + CO2. Its pathway is pyrimidine metabolism; UMP biosynthesis via de novo pathway; UMP from orotate: step 2/2. The chain is Orotidine 5'-phosphate decarboxylase (URA3) from Candida albicans (strain SC5314 / ATCC MYA-2876) (Yeast).